Here is a 308-residue protein sequence, read N- to C-terminus: Ribonuclease Z (308 aa).

Positions 61, 63, 65, 66, 142, 211, and 270 each coordinate Zn(2+). Asp-65 serves as the catalytic Proton acceptor.

The protein belongs to the RNase Z family. Homodimer. Zn(2+) serves as cofactor.

It carries out the reaction Endonucleolytic cleavage of RNA, removing extra 3' nucleotides from tRNA precursor, generating 3' termini of tRNAs. A 3'-hydroxy group is left at the tRNA terminus and a 5'-phosphoryl group is left at the trailer molecule.. Its function is as follows. Zinc phosphodiesterase, which displays some tRNA 3'-processing endonuclease activity. Probably involved in tRNA maturation, by removing a 3'-trailer from precursor tRNA. The protein is Ribonuclease Z of Clostridium beijerinckii (strain ATCC 51743 / NCIMB 8052) (Clostridium acetobutylicum).